The primary structure comprises 240 residues: Uridylate kinase (240 aa).

Position 13–16 (13–16 (KASG)) interacts with ATP. Residues 21-26 (GSQGFG) form an involved in allosteric activation by GTP region. Gly55 serves as a coordination point for UMP. Positions 56 and 60 each coordinate ATP. UMP is bound by residues Asp75 and 136–143 (TGNPFFTT). ATP contacts are provided by Thr163, Gln164, Tyr169, and Asp172.

It belongs to the UMP kinase family. Homohexamer.

Its subcellular location is the cytoplasm. It catalyses the reaction UMP + ATP = UDP + ADP. It participates in pyrimidine metabolism; CTP biosynthesis via de novo pathway; UDP from UMP (UMPK route): step 1/1. Allosterically activated by GTP. Inhibited by UTP. Its function is as follows. Catalyzes the reversible phosphorylation of UMP to UDP. This chain is Uridylate kinase, found in Sinorhizobium medicae (strain WSM419) (Ensifer medicae).